Consider the following 139-residue polypeptide: Nucleoside diphosphate kinase (139 aa).

ATP-binding residues include Lys11, Phe59, Arg87, Thr93, Arg104, and Asn114. His117 acts as the Pros-phosphohistidine intermediate in catalysis.

This sequence belongs to the NDK family. Homotetramer. The cofactor is Mg(2+).

It localises to the cytoplasm. It carries out the reaction a 2'-deoxyribonucleoside 5'-diphosphate + ATP = a 2'-deoxyribonucleoside 5'-triphosphate + ADP. The catalysed reaction is a ribonucleoside 5'-diphosphate + ATP = a ribonucleoside 5'-triphosphate + ADP. Functionally, major role in the synthesis of nucleoside triphosphates other than ATP. The ATP gamma phosphate is transferred to the NDP beta phosphate via a ping-pong mechanism, using a phosphorylated active-site intermediate. The protein is Nucleoside diphosphate kinase of Wolbachia sp. subsp. Drosophila simulans (strain wRi).